Reading from the N-terminus, the 315-residue chain is Eukaryotic translation initiation factor 2 subunit 1 (315 aa).

In terms of domain architecture, S1 motif spans 17–88; that stretch reads EDVVMVNVRS…EKGYIDLSKR (72 aa). At S49 the chain carries Phosphoserine; by HRI. Phosphoserine is present on S52. K141 is modified (N6-acetyllysine). A Phosphoserine modification is found at S158. Phosphothreonine occurs at positions 279 and 281. The disordered stretch occupies residues 292-315; sequence RLERENAEVDGDDDAEEMEAKAED. Residues 299–308 are compositionally biased toward acidic residues; sequence EVDGDDDAEE.

Belongs to the eIF-2-alpha family. In terms of assembly, eukaryotic translation initiation factor 2 eIF2 is a heterotrimeric complex composed of an alpha (EIF2S1), a beta (EIF2S2) and a gamma (EIF2S3) chain. eIF2 is member of the 43S pre-initiation complex (43S PIC). eIF2 forms a complex with at least CELF1/CUGBP1, CALR, CALR3, EIF2S1, EIF2S2, HSP90B1 and HSPA5. Interaction with METAP2 protects EIF2S1 from inhibitory phosphorylation. Interacts with ABCF1. Associates with ribosomes. Interacts with DDX3X in an RNA-independent manner. Phosphorylation at Ser-49 and Ser-52 stabilizes the eIF-2/GDP/eIF2B complex and prevents GDP/GTP exchange reaction, thus impairing the recycling of eIF-2 between successive rounds of initiation and leading to global inhibition of translation, while concomitantly initiating the preferential translation of integrated stress response (ISR)-specific mRNAs. Substrate for at least 4 kinases: EIF2AK1/HRI, EIF2AK2/PKR, EIF2AK3/PERK and EIF2AK4/GCN2. Phosphorylation at Ser-52 by the EIF2AK3/PERK protein kinase occurs in response to the unfolded protein response. Phosphorylation on Ser-52 by the EIF2AK4/GCN2 protein kinase occurs in response to amino acid starvation and UV irradiation. Phosphorylation at Ser-52 by EIF2AK1/HRI in response to mitochondrial damage promotes relocalization to the mitochondrial surface.

It localises to the cytoplasm. The protein resides in the stress granule. Its subcellular location is the cytosol. The protein localises to the mitochondrion. With respect to regulation, activity is regulated by phosphorylation at Ser-49 and Ser-52, which stabilizes the eIF2/GDP/eIF2B complex and prevents the eIF2B-mediated exchange of GDP for GTP, thereby preventing the formation of the 43S pre-initiation complex (43S PIC). This results in the global attenuation of 5' cap-dependent protein synthesis and concomitant translation of ISR-specific mRNAs that contain a short upstream open reading frame (uORF) in their 5' UTR, such as ATF4, ATF5, DDIT3/CHOP and PPP1R15A/GADD34. Functionally, member of the eIF2 complex that functions in the early steps of protein synthesis by forming a ternary complex with GTP and initiator tRNA. This complex binds to a 40S ribosomal subunit, followed by mRNA binding to form a 43S pre-initiation complex. Junction of the 60S ribosomal subunit to form the 80S initiation complex is preceded by hydrolysis of the GTP bound to eIF2 and release of an eIF2-GDP binary complex. In order for eIF2 to recycle and catalyze another round of initiation, the GDP bound to eIF2 must exchange with GTP by way of a reaction catalyzed by eIF2B. EIF2S1/eIF2-alpha is a key component of the integrated stress response (ISR), required for adaptation to various stress: phosphorylation by metabolic-stress sensing protein kinases (EIF2AK1/HRI, EIF2AK2/PKR, EIF2AK3/PERK and EIF2AK4/GCN2) in response to stress converts EIF2S1/eIF2-alpha in a global protein synthesis inhibitor, leading to a attenuation of cap-dependent translation, while concomitantly initiating the preferential translation of ISR-specific mRNAs, such as the transcriptional activators ATF4 and QRICH1, and hence allowing ATF4- and QRICH1-mediated reprogramming. EIF2S1/eIF2-alpha also acts as an activator of mitophagy in response to mitochondrial damage: phosphorylation by EIF2AK1/HRI promotes relocalization to the mitochondrial surface, thereby triggering PRKN-independent mitophagy. The protein is Eukaryotic translation initiation factor 2 subunit 1 (EIF2S1) of Sus scrofa (Pig).